A 269-amino-acid chain; its full sequence is Putative esterase/lipase 1 (269 aa).

Histidine 27 is an active-site residue. The Charge relay system role is filled by serine 94.

Belongs to the lipase/esterase LIP3/BchO family.

The protein is Putative esterase/lipase 1 of Mycoplasma pneumoniae (strain ATCC 29342 / M129 / Subtype 1) (Mycoplasmoides pneumoniae).